Consider the following 1482-residue polypeptide: Chromosome partition protein MukB (1482 aa).

Position 34 to 41 (34 to 41 (GGNGAGKS)) interacts with ATP. 6 coiled-coil regions span residues 326–416 (LEAD…AIQY), 509–603 (RHLA…RAPV), 780–805 (RAAR…ATLS), 835–923 (EAEI…AKLE), 979–1116 (LSGN…AKAG), and 1210–1265 (EAIE…LQSV). The flexible hinge stretch occupies residues 666–783 (PGGAEDSRLN…TLPLFGRAAR (118 aa)).

Belongs to the SMC family. MukB subfamily. In terms of assembly, homodimerization via its hinge domain. Binds to DNA via its C-terminal region. Interacts, and probably forms a ternary complex, with MukE and MukF via its C-terminal region. The complex formation is stimulated by calcium or magnesium. Interacts with tubulin-related protein FtsZ.

It localises to the cytoplasm. The protein localises to the nucleoid. In terms of biological role, plays a central role in chromosome condensation, segregation and cell cycle progression. Functions as a homodimer, which is essential for chromosome partition. Involved in negative DNA supercoiling in vivo, and by this means organize and compact chromosomes. May achieve or facilitate chromosome segregation by condensation DNA from both sides of a centrally located replisome during cell division. This Enterobacter sp. (strain 638) protein is Chromosome partition protein MukB.